The chain runs to 161 residues: uncharacterized protein (161 aa).

Positions 126 to 161 are disordered; sequence TPSNCGESSTSSGQSSGDESNCSLRTHGVYTRGEQH. Low complexity predominate over residues 128–148; the sequence is SNCGESSTSSGQSSGDESNCS.

This sequence belongs to the herpesviridae US1 family.

This is an uncharacterized protein from Human cytomegalovirus (strain AD169) (HHV-5).